We begin with the raw amino-acid sequence, 409 residues long: MQIFLVGGAVRDQLLQLKVKDRDYVVIAATPDKLLKLGFQQVGKDFPVFIHPQTGDEYALARTERKKGSGHNGFECYAGLDVTLTEDLKRRDLTINAIAQSPQGELIDPYHGLQDIQTKTLRHISTAFSEDPLRVLRVARFAARFYDLGFKIAPETLDLMRSLSSSGELNHLTAERVWQETANALKTNNPQIYFQVLRDCGALPLLFPEIEALFGVPAPKKWHPEIDTGIHTLMVVEQSVKLSDSLAFRFACLVHDLGKALTPKELWPSHKGHGKLGLQLINNLCERLKIPNECRELACLVSEHHTLIHKGLELEADSLITLMDQNDAWRKPERFSQMLQCCVADSKGRTGFEEKDYPSADYIWRAFQVAQLVDVQPIIKQGYQGAEIKAQLKHARIRSVEQYKQKHSV.

G8 and R11 together coordinate ATP. CTP-binding residues include G8 and R11. 2 residues coordinate Mg(2+): D21 and D23. The ATP site is built by R91, R137, and R140. Residues R91, R137, and R140 each contribute to the CTP site. In terms of domain architecture, HD spans T228–W329.

The protein belongs to the tRNA nucleotidyltransferase/poly(A) polymerase family. Bacterial CCA-adding enzyme type 1 subfamily. In terms of assembly, monomer. Can also form homodimers and oligomers. Mg(2+) serves as cofactor. Ni(2+) is required as a cofactor.

It catalyses the reaction a tRNA precursor + 2 CTP + ATP = a tRNA with a 3' CCA end + 3 diphosphate. It carries out the reaction a tRNA with a 3' CCA end + 2 CTP + ATP = a tRNA with a 3' CCACCA end + 3 diphosphate. Its function is as follows. Catalyzes the addition and repair of the essential 3'-terminal CCA sequence in tRNAs without using a nucleic acid template. Adds these three nucleotides in the order of C, C, and A to the tRNA nucleotide-73, using CTP and ATP as substrates and producing inorganic pyrophosphate. tRNA 3'-terminal CCA addition is required both for tRNA processing and repair. Also involved in tRNA surveillance by mediating tandem CCA addition to generate a CCACCA at the 3' terminus of unstable tRNAs. While stable tRNAs receive only 3'-terminal CCA, unstable tRNAs are marked with CCACCA and rapidly degraded. The chain is Multifunctional CCA protein from Psychromonas ingrahamii (strain DSM 17664 / CCUG 51855 / 37).